Reading from the N-terminus, the 324-residue chain is Putative exosome complex exonuclease RRP42 (324 aa).

The protein belongs to the RNase PH family. In terms of assembly, component of the RNA exosome complex.

It is found in the nucleus. Its subcellular location is the nucleolus. It localises to the cytoplasm. Non-catalytic component of the RNA exosome complex which has 3'-&gt;5' exoribonuclease activity and participates in a multitude of cellular RNA processing and degradation events. In Dictyostelium discoideum (Social amoeba), this protein is Putative exosome complex exonuclease RRP42 (exosc7).